Reading from the N-terminus, the 316-residue chain is Cytochrome c biogenesis protein CcsA (316 aa).

The next 8 helical transmembrane spans lie at 9-29, 39-61, 70-90, 94-114, 143-163, 224-244, 257-271, and 289-309; these read IFVN…LINL, FSKN…RYLQ, LYES…ILEV, IGLS…FATL, LISY…LSLF, TISL…VWAN, ETWA…AIYL, and SMGF…GVGL.

The protein belongs to the CcmF/CycK/Ccl1/NrfE/CcsA family. As to quaternary structure, may interact with Ccs1.

It localises to the plastid. It is found in the chloroplast thylakoid membrane. Functionally, required during biogenesis of c-type cytochromes (cytochrome c6 and cytochrome f) at the step of heme attachment. This chain is Cytochrome c biogenesis protein CcsA, found in Adiantum capillus-veneris (Maidenhair fern).